The following is a 280-amino-acid chain: Energy-coupling factor transporter ATP-binding protein EcfA2 (280 aa).

Positions 3–245 constitute an ABC transporter domain; it reads IEFKNVSYTY…VELLESKQLG (243 aa). ATP is bound at residue 40–47; it reads GHTGSGKS.

Belongs to the ABC transporter superfamily. Energy-coupling factor EcfA family. In terms of assembly, forms a stable energy-coupling factor (ECF) transporter complex composed of 2 membrane-embedded substrate-binding proteins (S component), 2 ATP-binding proteins (A component) and 2 transmembrane proteins (T component).

It is found in the cell membrane. Its function is as follows. ATP-binding (A) component of a common energy-coupling factor (ECF) ABC-transporter complex. Unlike classic ABC transporters this ECF transporter provides the energy necessary to transport a number of different substrates. This is Energy-coupling factor transporter ATP-binding protein EcfA2 from Streptococcus agalactiae serotype Ia (strain ATCC 27591 / A909 / CDC SS700).